We begin with the raw amino-acid sequence, 175 residues long: CDP-archaeol synthase (175 aa).

Transmembrane regions (helical) follow at residues 41 to 61 (GFFV…QLLE), 82 to 102 (TILI…MSFF), 122 to 142 (FVLG…AEQF), and 147 to 167 (IAVI…VGYF).

The protein belongs to the CDP-archaeol synthase family. It depends on Mg(2+) as a cofactor.

The protein resides in the cell membrane. It catalyses the reaction 2,3-bis-O-(geranylgeranyl)-sn-glycerol 1-phosphate + CTP + H(+) = CDP-2,3-bis-O-(geranylgeranyl)-sn-glycerol + diphosphate. It functions in the pathway membrane lipid metabolism; glycerophospholipid metabolism. Catalyzes the formation of CDP-2,3-bis-(O-geranylgeranyl)-sn-glycerol (CDP-archaeol) from 2,3-bis-(O-geranylgeranyl)-sn-glycerol 1-phosphate (DGGGP) and CTP. This reaction is the third ether-bond-formation step in the biosynthesis of archaeal membrane lipids. This is CDP-archaeol synthase from Methanococcoides burtonii (strain DSM 6242 / NBRC 107633 / OCM 468 / ACE-M).